We begin with the raw amino-acid sequence, 449 residues long: Glucose-6-phosphate isomerase (449 aa).

Residue Glu-291 is the Proton donor of the active site. Catalysis depends on residues His-312 and Lys-426.

Belongs to the GPI family.

The protein localises to the cytoplasm. The enzyme catalyses alpha-D-glucose 6-phosphate = beta-D-fructose 6-phosphate. The protein operates within carbohydrate biosynthesis; gluconeogenesis. Its pathway is carbohydrate degradation; glycolysis; D-glyceraldehyde 3-phosphate and glycerone phosphate from D-glucose: step 2/4. Functionally, catalyzes the reversible isomerization of glucose-6-phosphate to fructose-6-phosphate. This chain is Glucose-6-phosphate isomerase, found in Streptococcus gordonii (strain Challis / ATCC 35105 / BCRC 15272 / CH1 / DL1 / V288).